A 226-amino-acid polypeptide reads, in one-letter code: Low-molecular weight cobalt-containing nitrile hydratase subunit beta (226 aa).

Residues 1 to 22 are disordered; that stretch reads MDGIHDLGGRAGLGPIKPESDE.

Belongs to the nitrile hydratase subunit beta family. In terms of assembly, heterodimer of an alpha and a beta chain.

It carries out the reaction an aliphatic primary amide = an aliphatic nitrile + H2O. In terms of biological role, NHase catalyzes the hydration of various nitrile compounds to the corresponding amides. This is Low-molecular weight cobalt-containing nitrile hydratase subunit beta from Rhodococcus rhodochrous.